The primary structure comprises 227 residues: MIVSIPDVLSPAEAAAMRAQLEASDAWVDGRATAGYQGAPVKRNQQIGEGSPIALEMGDRIVASLERHPLFISAALPNKVYPPLFNRYEGGMHFGSHVDGAIRLVPGSGARVRTDVSVTLFLTPPDEYDGGELLIEDTFGVQEVKLPAGHAIVYPGTSLHQVRPVTRGARVASFFWVQSLVRDDTQRAMLFDLDGAIQRLNASNGDEAARRTLVGCYHNLLRMWSDT.

The Fe2OG dioxygenase domain maps to 79–179; the sequence is KVYPPLFNRY…RVASFFWVQS (101 aa). Positions 97, 99, and 160 each coordinate Fe cation. Arg170 lines the 2-oxoglutarate pocket.

Requires Fe(2+) as cofactor. The cofactor is L-ascorbate.

In Paraburkholderia phymatum (strain DSM 17167 / CIP 108236 / LMG 21445 / STM815) (Burkholderia phymatum), this protein is PKHD-type hydroxylase Bphy_5374.